A 204-amino-acid polypeptide reads, in one-letter code: N-(5'-phosphoribosyl)anthranilate isomerase (204 aa).

Belongs to the TrpF family.

It catalyses the reaction N-(5-phospho-beta-D-ribosyl)anthranilate = 1-(2-carboxyphenylamino)-1-deoxy-D-ribulose 5-phosphate. The protein operates within amino-acid biosynthesis; L-tryptophan biosynthesis; L-tryptophan from chorismate: step 3/5. This is N-(5'-phosphoribosyl)anthranilate isomerase from Pseudomonas fluorescens (strain Pf0-1).